Consider the following 433-residue polypeptide: 3-phosphoshikimate 1-carboxyvinyltransferase (433 aa).

3 residues coordinate 3-phosphoshikimate: Lys22, Ser23, and Arg27. Lys22 is a binding site for phosphoenolpyruvate. Phosphoenolpyruvate is bound by residues Gly96 and Arg130. Residues Ser176, Ser177, Gln178, Ser204, Asp319, Asn342, and Lys346 each coordinate 3-phosphoshikimate. A phosphoenolpyruvate-binding site is contributed by Gln178. The active-site Proton acceptor is the Asp319. Phosphoenolpyruvate contacts are provided by Arg350, Arg394, and Lys419.

Belongs to the EPSP synthase family. Monomer.

Its subcellular location is the cytoplasm. The catalysed reaction is 3-phosphoshikimate + phosphoenolpyruvate = 5-O-(1-carboxyvinyl)-3-phosphoshikimate + phosphate. It participates in metabolic intermediate biosynthesis; chorismate biosynthesis; chorismate from D-erythrose 4-phosphate and phosphoenolpyruvate: step 6/7. Functionally, catalyzes the transfer of the enolpyruvyl moiety of phosphoenolpyruvate (PEP) to the 5-hydroxyl of shikimate-3-phosphate (S3P) to produce enolpyruvyl shikimate-3-phosphate and inorganic phosphate. This is 3-phosphoshikimate 1-carboxyvinyltransferase from Actinobacillus succinogenes (strain ATCC 55618 / DSM 22257 / CCUG 43843 / 130Z).